The following is a 287-amino-acid chain: Thymidylate synthase (287 aa).

Arginine 21 provides a ligand contact to dUMP. Asparagine 51 is a (6R)-5,10-methylene-5,6,7,8-tetrahydrofolate binding site. 150 to 151 (RR) serves as a coordination point for dUMP. Cysteine 170 functions as the Nucleophile in the catalytic mechanism. DUMP contacts are provided by residues 190-193 (RSGD), asparagine 201, and 231-233 (HIY). Aspartate 193 provides a ligand contact to (6R)-5,10-methylene-5,6,7,8-tetrahydrofolate. Alanine 286 serves as a coordination point for (6R)-5,10-methylene-5,6,7,8-tetrahydrofolate.

The protein belongs to the thymidylate synthase family. Bacterial-type ThyA subfamily. Homodimer.

The protein resides in the cytoplasm. The enzyme catalyses dUMP + (6R)-5,10-methylene-5,6,7,8-tetrahydrofolate = 7,8-dihydrofolate + dTMP. Its pathway is pyrimidine metabolism; dTTP biosynthesis. In terms of biological role, catalyzes the reductive methylation of 2'-deoxyuridine-5'-monophosphate (dUMP) to 2'-deoxythymidine-5'-monophosphate (dTMP) while utilizing 5,10-methylenetetrahydrofolate (mTHF) as the methyl donor and reductant in the reaction, yielding dihydrofolate (DHF) as a by-product. This enzymatic reaction provides an intracellular de novo source of dTMP, an essential precursor for DNA biosynthesis. The sequence is that of Thymidylate synthase from Mycoplasma genitalium (strain ATCC 33530 / DSM 19775 / NCTC 10195 / G37) (Mycoplasmoides genitalium).